A 179-amino-acid polypeptide reads, in one-letter code: Large ribosomal subunit protein uL5 (179 aa).

Belongs to the universal ribosomal protein uL5 family. As to quaternary structure, part of the 50S ribosomal subunit; part of the 5S rRNA/L5/L18/L25 subcomplex. Contacts the 5S rRNA and the P site tRNA. Forms a bridge to the 30S subunit in the 70S ribosome.

In terms of biological role, this is one of the proteins that bind and probably mediate the attachment of the 5S RNA into the large ribosomal subunit, where it forms part of the central protuberance. In the 70S ribosome it contacts protein S13 of the 30S subunit (bridge B1b), connecting the 2 subunits; this bridge is implicated in subunit movement. Contacts the P site tRNA; the 5S rRNA and some of its associated proteins might help stabilize positioning of ribosome-bound tRNAs. The chain is Large ribosomal subunit protein uL5 from Albidiferax ferrireducens (strain ATCC BAA-621 / DSM 15236 / T118) (Rhodoferax ferrireducens).